The chain runs to 453 residues: Transcription factor radR (453 aa).

Residues 1-30 (MPNNLQHQEGSYSLRSSNDVSPADDWTQTN) are compositionally biased toward polar residues. Residues 1–45 (MPNNLQHQEGSYSLRSSNDVSPADDWTQTNDPKEKKRIQNRVAQR) form a disordered region. Positions 30-62 (NDPKEKKRIQNRVAQRTYRNRIRARLEELENKI) constitute a bZIP domain. A basic motif region spans residues 33-50 (KEKKRIQNRVAQRTYRNR). Residues 51 to 58 (IRARLEEL) are leucine-zipper. A disordered region spans residues 160-184 (APRAAQARSIAPTSTGMHQISPSYG). The segment covering 170-181 (APTSTGMHQISP) has biased composition (polar residues).

It belongs to the bZIP family.

The protein resides in the nucleus. Its function is as follows. Transcription factor that positively regulates the expression of the gene clusters that mediate the biosynthesis of pestheic acid, a diphenyl ether which is a biosynthetic precursor of the unique chloropupukeananes. This is Transcription factor radR from Floropilus chiversii (Chaetomium chiversii).